We begin with the raw amino-acid sequence, 359 residues long: Peptide chain release factor 1 (359 aa).

An N5-methylglutamine modification is found at glutamine 235.

This sequence belongs to the prokaryotic/mitochondrial release factor family. Methylated by PrmC. Methylation increases the termination efficiency of RF1.

Its subcellular location is the cytoplasm. Peptide chain release factor 1 directs the termination of translation in response to the peptide chain termination codons UAG and UAA. The protein is Peptide chain release factor 1 of Nitrosomonas europaea (strain ATCC 19718 / CIP 103999 / KCTC 2705 / NBRC 14298).